We begin with the raw amino-acid sequence, 156 residues long: Endoribonuclease YbeY (156 aa).

The Zn(2+) site is built by His122, His126, and His132.

This sequence belongs to the endoribonuclease YbeY family. The cofactor is Zn(2+).

Its subcellular location is the cytoplasm. In terms of biological role, single strand-specific metallo-endoribonuclease involved in late-stage 70S ribosome quality control and in maturation of the 3' terminus of the 16S rRNA. This is Endoribonuclease YbeY from Geobacillus thermodenitrificans (strain NG80-2).